The chain runs to 355 residues: Inositol-tetrakisphosphate 1-kinase 4 (355 aa).

K65 provides a ligand contact to 1D-myo-inositol 1,3,4-trisphosphate. ATP-binding residues include R101 and K146. The ATP-grasp domain maps to 107–318 (VVSGLRTPVS…FFLEMLRGTR (212 aa)). 2 residues coordinate 1D-myo-inositol 1,3,4-trisphosphate: H157 and K190. ATP is bound by residues 179-190 (QEFVNHGGVLFK) and S205. The disordered stretch occupies residues 225-248 (FANISNQPLPPPDDDGGAADDDTP). The segment covering 236–247 (PDDDGGAADDDT) has biased composition (acidic residues). Mg(2+) contacts are provided by D272, D289, and N291. Position 291 (N291) interacts with 1D-myo-inositol 1,3,4-trisphosphate.

The protein belongs to the ITPK1 family. As to quaternary structure, monomer. The cofactor is Mg(2+).

The catalysed reaction is 1D-myo-inositol 3,4,5,6-tetrakisphosphate + ATP = 1D-myo-inositol 1,3,4,5,6-pentakisphosphate + ADP + H(+). It carries out the reaction 1D-myo-inositol 1,3,4-trisphosphate + ATP = 1D-myo-inositol 1,3,4,5-tetrakisphosphate + ADP + H(+). It catalyses the reaction 1D-myo-inositol 1,3,4-trisphosphate + ATP = 1D-myo-inositol 1,3,4,6-tetrakisphosphate + ADP + H(+). Its function is as follows. Kinase that can phosphorylate various inositol polyphosphate such as Ins(3,4,5,6)P4 or Ins(1,3,4)P3 and participates in phytic acid biosynthesis in developing seeds. Phytic acid is the primary storage form of phosphorus in cereal grains and other plant seeds. The chain is Inositol-tetrakisphosphate 1-kinase 4 (ITPK4) from Oryza sativa subsp. indica (Rice).